A 367-amino-acid chain; its full sequence is Glutamate 5-kinase (367 aa).

An ATP-binding site is contributed by Lys-9. The substrate site is built by Ser-49, Asp-136, and Asn-148. ATP contacts are provided by residues Thr-168–Asp-169 and Thr-210–Lys-216. The 75-residue stretch at Ser-276 to Arg-350 folds into the PUA domain.

It belongs to the glutamate 5-kinase family.

It localises to the cytoplasm. The enzyme catalyses L-glutamate + ATP = L-glutamyl 5-phosphate + ADP. The protein operates within amino-acid biosynthesis; L-proline biosynthesis; L-glutamate 5-semialdehyde from L-glutamate: step 1/2. Functionally, catalyzes the transfer of a phosphate group to glutamate to form L-glutamate 5-phosphate. The sequence is that of Glutamate 5-kinase from Bacillus cereus (strain ATCC 10987 / NRS 248).